A 392-amino-acid polypeptide reads, in one-letter code: MRFHDSILIFFSLASLYQHVHGARQVVRPKEKMTTSEEVKPWLRTVYGSQKELVTPTVIAGVTFSEKPEETPNPLKPWVSLEHDGRPKTIKPEINKGRTKKGRPDYSTYFKTVSSHTYSYEELKAHNMGPNEVFVEEEYIDEDDTYVSLNPIVRCTPNLYFNKGLAKDIRSEPFCTPYENSRWKVDKTYFVTWYTRFFTDENSGKVADKVRVHLSYVKENPVEKGNYKRDIPATFFSSEWIDNDNGLMPVEVRDEWLQDQFDRRIVVSVQPIYISDEDFDPLQYGILLYITKGSKVFKPTKEQLALDDAGITNDQWYYVALSIPTVVVVFFVFMYFFLYVNGKNRDFTDVTRKALNKKRRVLGKFSEMKKFKNMKNHKYTELPSYKKTSKQN.

The first 22 residues, 1 to 22 (MRFHDSILIFFSLASLYQHVHG), serve as a signal peptide directing secretion. O-linked (Man) threonine glycans are attached at residues Thr34 and Thr35. An O-linked (Man) serine glycan is attached at Ser36. Thr45 is a glycosylation site (O-linked (Man) threonine). Residue Ser49 is glycosylated (O-linked (Man) serine). Thr55, Thr57, and Thr63 each carry an O-linked (Man) threonine glycan. Ser65 carries an O-linked (Man) serine glycan. O-linked (Man) threonine glycosylation is present at Thr71. Ser80 carries O-linked (Man) serine glycosylation. Thr89 and Thr99 each carry an O-linked (Man) threonine glycan. O-linked (Man) serine glycosylation is present at Ser107. Residues Thr108 and Thr112 are each glycosylated (O-linked (Man) threonine). 2 O-linked (Man) serine glycosylation sites follow: Ser114 and Ser115. O-linked (Man) threonine glycosylation is present at Thr117. O-linked (Man) serine glycans are attached at residues Ser119 and Ser148. An O-linked (Man) threonine glycan is attached at Thr156. Ser171 carries O-linked (Man) serine glycosylation. O-linked (Man) threonine glycosylation occurs at Thr176. The O-linked (Man) serine glycan is linked to Ser181. O-linked (Man) threonine glycosylation is found at Thr188, Thr192, Thr195, and Thr199. Residues Ser203 and Ser215 are each glycosylated (O-linked (Man) serine). The Lumenal segment spans residues 230–317 (DIPATFFSSE…DAGITNDQWY (88 aa)). The chain crosses the membrane as a helical span at residues 318–338 (YVALSIPTVVVVFFVFMYFFL). Topologically, residues 339-392 (YVNGKNRDFTDVTRKALNKKRRVLGKFSEMKKFKNMKNHKYTELPSYKKTSKQN) are cytoplasmic.

Interacts with EXP1. PSG1-N' interacts with ERAD-related proteins involved in PMA1 quality control including EPS1, CDC48, UBX2 and SSM4. PSG1-C' interacts with the TLG1/2 SNARE complex proteins TLG1, TLG2 and VTI1. In terms of processing, the precursor protein is cleaved into two polypeptide chains, PSG1-N' and PSG1-C'. The cleavage is performed in the Golgi apparatus by Ca(+)-dependent serine protease KEX2 between Arg-229 and Asp-230. Post-translationally, PSG1-N' is highly O-mannosylated.

It is found in the golgi apparatus lumen. The protein localises to the cytoplasmic vesicle. The protein resides in the COPI-coated vesicle membrane. Its function is as follows. With EXP1, the specific cargo receptor protein for the plasma membrane ATPase PMA1, is involved in the transport and/or maturation of PMA1. EXP1 and PSG1 probably act sequentially to promote PMA1 sorting between the ER and the Golgi, with EXP1 promoting PMA1 export from the ER to the Golgi while PSG1 has a role in PMA1 maturation or quality control in the Golgi. PSG1 might also couple PMA1 sorting and maturation in the early secretory pathway with the glycosylation machinery. PSG1 is cleaved by KEX2 in two stable peptides, PSG1-N' and PSG1-C', the former supporting a role in maturation quality control, the latter having a role in modulating vesicular trafficking. This Saccharomyces cerevisiae (strain ATCC 204508 / S288c) (Baker's yeast) protein is PMA1 stabilization in the Golgi protein 1.